Here is a 476-residue protein sequence, read N- to C-terminus: MASPTASSILQYSGTGQKEKGTLDHGDVPSVDIGKGETKEVFQENVDGVEFRTVSWQRATVVFLKINFAMSILAIPAALGALGSIGGSLCIIGYTSLNVYTGLILGDIKHNHTECHTLADMMGLIWGRWGRELVGVQIIIAQTLVTAGGVVAITIGFNALSDHGTCTVAFGLISAIAVTAFSAIRTFSKLGWLTWIGFITFVIGVFIFVVAVTQVDRPAAAPQTGDFDLGWAPIAYPSFVVGMVSVTNIFISTCGSSNFIPVISEMKRPQDYRKACLVAGFIVGAMYLSFSLVIYRYCGVWLSTPAFASAGPIVKKVAYGVSLPGLILGVGIYQHVAAKYAFVRVLRDSKHLQANTFTHWGTWLGINIALGTAAFIVAEAVPILNYLLGLAGAICLAPFSLIFPALLWMHEFKKYKTGTTTQKVKYSFHVLIMMFGFFMMIAGFYSVVVLIKEAFDTGTIAKVFDCADNSGFVQGK.

The chain crosses the membrane as a helical span at residues 72-92 (ILAIPAALGALGSIGGSLCII). N-linked (GlcNAc...) asparagine glycosylation is present at Asn-111. The next 9 helical transmembrane spans lie at 133-153 (LVGVQIIIAQTLVTAGGVVAI), 164-184 (GTCTVAFGLISAIAVTAFSAI), 192-212 (WLTWIGFITFVIGVFIFVVAV), 231-251 (WAPIAYPSFVVGMVSVTNIFI), 275-295 (ACLVAGFIVGAMYLSFSLVIY), 317-337 (VAYGVSLPGLILGVGIYQHVA), 364-384 (LGINIALGTAAFIVAEAVPIL), 387-407 (LLGLAGAICLAPFSLIFPALL), and 431-451 (LIMMFGFFMMIAGFYSVVVLI).

Belongs to the amino acid/polyamine transporter 2 family.

The protein localises to the membrane. Its function is as follows. Transmembrane transporter; part of the Fusarium detoxification of benzoxazolinone cluster involved in the degradation of benzoxazolinones produced by the host plant. Maize, wheat, and rye produce the 2 benzoxazinone phytoanticipins 2,4-dihy-droxy-7-methoxy-1,4-benzoxazin-3-one (DIMBOA) and 2,4-dihydroxy-1,4-benzoxazin-3-one (DIBOA) that, due to their inherent instability once released, spontaneously degrade to the more stable corresponding benzoxazolinones, 6-methoxy-2-benzoxazolinone (MBOA) and 2-benzoxazolinone (BOA), respectively. FPSE_08127 is proposed to shuttle metabolites of benzoxazolinone degradation. This chain is Transmembrane transporter FPSE_08127, found in Fusarium pseudograminearum (strain CS3096) (Wheat and barley crown-rot fungus).